The chain runs to 445 residues: ATP-dependent protease ATPase subunit HslU (445 aa).

ATP is bound by residues I18, G60–E65, D258, E323, and R395.

This sequence belongs to the ClpX chaperone family. HslU subfamily. As to quaternary structure, a double ring-shaped homohexamer of HslV is capped on each side by a ring-shaped HslU homohexamer. The assembly of the HslU/HslV complex is dependent on binding of ATP.

It is found in the cytoplasm. Functionally, ATPase subunit of a proteasome-like degradation complex; this subunit has chaperone activity. The binding of ATP and its subsequent hydrolysis by HslU are essential for unfolding of protein substrates subsequently hydrolyzed by HslV. HslU recognizes the N-terminal part of its protein substrates and unfolds these before they are guided to HslV for hydrolysis. This is ATP-dependent protease ATPase subunit HslU from Syntrophotalea carbinolica (strain DSM 2380 / NBRC 103641 / GraBd1) (Pelobacter carbinolicus).